Here is a 113-residue protein sequence, read N- to C-terminus: Large ribosomal subunit protein bL17 (113 aa).

The protein belongs to the bacterial ribosomal protein bL17 family. Part of the 50S ribosomal subunit. Contacts protein L32.

The polypeptide is Large ribosomal subunit protein bL17 (Natranaerobius thermophilus (strain ATCC BAA-1301 / DSM 18059 / JW/NM-WN-LF)).